Here is a 902-residue protein sequence, read N- to C-terminus: HTH-type transcriptional regulator MalT (902 aa).

39–46 (SPAGYGKT) is a binding site for ATP. An HTH luxR-type domain is found at 832-897 (ELVRTSPLTQ…EAIVTAENLL (66 aa)). Residues 856 to 875 (NEQIAQELDVAGTTIKTHIR) constitute a DNA-binding region (H-T-H motif).

It belongs to the MalT family. In terms of assembly, monomer in solution. Oligomerizes to an active state in the presence of the positive effectors ATP and maltotriose.

Its activity is regulated as follows. Activated by ATP and maltotriose, which are both required for DNA binding. Its function is as follows. Positively regulates the transcription of the maltose regulon whose gene products are responsible for uptake and catabolism of malto-oligosaccharides. Specifically binds to the promoter region of its target genes, recognizing a short DNA motif called the MalT box. This chain is HTH-type transcriptional regulator MalT, found in Vibrio parahaemolyticus serotype O3:K6 (strain RIMD 2210633).